Here is a 95-residue protein sequence, read N- to C-terminus: Protein TusB (95 aa).

Belongs to the DsrH/TusB family. Heterohexamer, formed by a dimer of trimers. The hexameric TusBCD complex contains 2 copies each of TusB, TusC and TusD. The TusBCD complex interacts with TusE.

The protein resides in the cytoplasm. In terms of biological role, part of a sulfur-relay system required for 2-thiolation of 5-methylaminomethyl-2-thiouridine (mnm(5)s(2)U) at tRNA wobble positions. The chain is Protein TusB from Pectobacterium parmentieri.